The primary structure comprises 271 residues: Elongation factor Ts (271 aa).

Positions 76–79 (TDFV) are involved in Mg(2+) ion dislocation from EF-Tu.

The protein belongs to the EF-Ts family.

It localises to the cytoplasm. In terms of biological role, associates with the EF-Tu.GDP complex and induces the exchange of GDP to GTP. It remains bound to the aminoacyl-tRNA.EF-Tu.GTP complex up to the GTP hydrolysis stage on the ribosome. This chain is Elongation factor Ts, found in Saccharopolyspora erythraea (strain ATCC 11635 / DSM 40517 / JCM 4748 / NBRC 13426 / NCIMB 8594 / NRRL 2338).